A 357-amino-acid polypeptide reads, in one-letter code: uncharacterized protein (357 aa).

Residues 173–211 (VLPILEKLMQDESLYVRKSVANNLNDISKTHPHLLRKVA) form an HEAT repeat.

This is an uncharacterized protein from Bacillus subtilis (strain 168).